Here is a 328-residue protein sequence, read N- to C-terminus: Biotin synthase (328 aa).

Positions 41-260 (TAIETASLLS…VALARILMPA (220 aa)) constitute a Radical SAM core domain. The [4Fe-4S] cluster site is built by Cys-56, Cys-60, and Cys-63. 4 residues coordinate [2Fe-2S] cluster: Cys-100, Cys-131, Cys-191, and Arg-264.

It belongs to the radical SAM superfamily. Biotin synthase family. As to quaternary structure, homodimer. It depends on [4Fe-4S] cluster as a cofactor. Requires [2Fe-2S] cluster as cofactor.

The catalysed reaction is (4R,5S)-dethiobiotin + (sulfur carrier)-SH + 2 reduced [2Fe-2S]-[ferredoxin] + 2 S-adenosyl-L-methionine = (sulfur carrier)-H + biotin + 2 5'-deoxyadenosine + 2 L-methionine + 2 oxidized [2Fe-2S]-[ferredoxin]. The protein operates within cofactor biosynthesis; biotin biosynthesis; biotin from 7,8-diaminononanoate: step 2/2. Its function is as follows. Catalyzes the conversion of dethiobiotin (DTB) to biotin by the insertion of a sulfur atom into dethiobiotin via a radical-based mechanism. The chain is Biotin synthase from Cereibacter sphaeroides (strain ATCC 17023 / DSM 158 / JCM 6121 / CCUG 31486 / LMG 2827 / NBRC 12203 / NCIMB 8253 / ATH 2.4.1.) (Rhodobacter sphaeroides).